The sequence spans 230 residues: Uracil-DNA glycosylase (230 aa).

Residue Asp70 is the Proton acceptor of the active site.

It belongs to the uracil-DNA glycosylase (UDG) superfamily. UNG family.

It localises to the cytoplasm. It carries out the reaction Hydrolyzes single-stranded DNA or mismatched double-stranded DNA and polynucleotides, releasing free uracil.. Functionally, excises uracil residues from the DNA which can arise as a result of misincorporation of dUMP residues by DNA polymerase or due to deamination of cytosine. This is Uracil-DNA glycosylase from Pseudomonas entomophila (strain L48).